Here is a 122-residue protein sequence, read N- to C-terminus: Large ribosomal subunit protein uL14 (122 aa).

Belongs to the universal ribosomal protein uL14 family. As to quaternary structure, part of the 50S ribosomal subunit. Forms a cluster with proteins L3 and L19. In the 70S ribosome, L14 and L19 interact and together make contacts with the 16S rRNA in bridges B5 and B8.

Its function is as follows. Binds to 23S rRNA. Forms part of two intersubunit bridges in the 70S ribosome. This Ectopseudomonas mendocina (strain ymp) (Pseudomonas mendocina) protein is Large ribosomal subunit protein uL14.